Consider the following 834-residue polypeptide: Protein kintoun (834 aa).

Disordered regions lie at residues T214–P239, S374–P415, K547–R669, and K759–D834. Residue S378 is modified to Phosphoserine. Acidic residues predominate over residues P389 to L398. Residues A552–A571 show a composition bias toward basic and acidic residues. A compositionally biased stretch (acidic residues) spans E582 to S596. The segment covering D597 to K607 has biased composition (low complexity). Basic residues-rich tracts occupy residues K608–K619 and K759–Q773. S777 carries the post-translational modification Phosphoserine. The segment covering E785–P798 has biased composition (basic and acidic residues).

It belongs to the PIH1 family. Kintoun subfamily. Interacts with Pp1alpha-96A, Pp1-87B, Pp1-13C and flw.

The protein localises to the cytoplasm. Required for cytoplasmic pre-assembly of axonemal dyneins, thereby playing a central role in motility in cilia and flagella. Involved in pre-assembly of dynein arm complexes in the cytoplasm before intraflagellar transport loads them for the ciliary compartment. The sequence is that of Protein kintoun from Drosophila melanogaster (Fruit fly).